Reading from the N-terminus, the 299-residue chain is ATP phosphoribosyltransferase (299 aa).

The protein belongs to the ATP phosphoribosyltransferase family. Long subfamily. In terms of assembly, equilibrium between an active dimeric form, an inactive hexameric form and higher aggregates. Interconversion between the various forms is largely reversible and is influenced by the natural substrates and inhibitors of the enzyme. Requires Mg(2+) as cofactor.

The protein localises to the cytoplasm. It carries out the reaction 1-(5-phospho-beta-D-ribosyl)-ATP + diphosphate = 5-phospho-alpha-D-ribose 1-diphosphate + ATP. It participates in amino-acid biosynthesis; L-histidine biosynthesis; L-histidine from 5-phospho-alpha-D-ribose 1-diphosphate: step 1/9. Feedback inhibited by histidine. In terms of biological role, catalyzes the condensation of ATP and 5-phosphoribose 1-diphosphate to form N'-(5'-phosphoribosyl)-ATP (PR-ATP). Has a crucial role in the pathway because the rate of histidine biosynthesis seems to be controlled primarily by regulation of HisG enzymatic activity. This chain is ATP phosphoribosyltransferase, found in Salmonella choleraesuis (strain SC-B67).